Here is a 51-residue protein sequence, read N- to C-terminus: MEMKRVMMSSAERSKEKKRSISRRLGKYMKEQKGRIYIIRRCMVMLLCSHD.

Residues 1–25 (MEMKRVMMSSAERSKEKKRSISRRL) are disordered. Residues 16–25 (EKKRSISRRL) show a composition bias toward basic residues. The interval 20-51 (SISRRLGKYMKEQKGRIYIIRRCMVMLLCSHD) is required for DVL/RTFL small polypeptide activity. Residues 28-44 (YMKEQKGRIYIIRRCMV) form a helical membrane-spanning segment.

It belongs to the DVL/RTFL small polypeptides family. As to expression, mostly expressed in leaves and, to a lower extent, in roots and stems.

The protein resides in the cell membrane. In terms of biological role, small polypeptide acting as a regulatory molecule which coordinates cellular responses required for differentiation, growth and development, including leaves shape, pedicule elongation, inflorescence organization and fruit maturation, probably by restricting polar cell proliferation in lateral organs and coordinating socket cell recruitment and differentiation at trichome sites. The chain is Small polypeptide DEVIL 1 from Arabidopsis thaliana (Mouse-ear cress).